Reading from the N-terminus, the 283-residue chain is Probable endonuclease 4 (283 aa).

Residues histidine 69, histidine 109, glutamate 145, aspartate 179, histidine 182, histidine 216, aspartate 229, histidine 231, and glutamate 261 each coordinate Zn(2+).

It belongs to the AP endonuclease 2 family. The cofactor is Zn(2+).

It catalyses the reaction Endonucleolytic cleavage to 5'-phosphooligonucleotide end-products.. In terms of biological role, endonuclease IV plays a role in DNA repair. It cleaves phosphodiester bonds at apurinic or apyrimidinic (AP) sites, generating a 3'-hydroxyl group and a 5'-terminal sugar phosphate. The polypeptide is Probable endonuclease 4 (Prosthecochloris aestuarii (strain DSM 271 / SK 413)).